Reading from the N-terminus, the 327-residue chain is Methionyl-tRNA formyltransferase (327 aa).

117 to 120 (SLLP) contributes to the (6S)-5,6,7,8-tetrahydrofolate binding site.

Belongs to the Fmt family.

It catalyses the reaction L-methionyl-tRNA(fMet) + (6R)-10-formyltetrahydrofolate = N-formyl-L-methionyl-tRNA(fMet) + (6S)-5,6,7,8-tetrahydrofolate + H(+). Its function is as follows. Attaches a formyl group to the free amino group of methionyl-tRNA(fMet). The formyl group appears to play a dual role in the initiator identity of N-formylmethionyl-tRNA by promoting its recognition by IF2 and preventing the misappropriation of this tRNA by the elongation apparatus. The sequence is that of Methionyl-tRNA formyltransferase from Delftia acidovorans (strain DSM 14801 / SPH-1).